The chain runs to 535 residues: Formate--tetrahydrofolate ligase (535 aa).

50–57 (TPAGEGKT) contacts ATP.

It belongs to the formate--tetrahydrofolate ligase family.

The catalysed reaction is (6S)-5,6,7,8-tetrahydrofolate + formate + ATP = (6R)-10-formyltetrahydrofolate + ADP + phosphate. Its pathway is one-carbon metabolism; tetrahydrofolate interconversion. This is Formate--tetrahydrofolate ligase from Picrophilus torridus (strain ATCC 700027 / DSM 9790 / JCM 10055 / NBRC 100828 / KAW 2/3).